Consider the following 409-residue polypeptide: NADH-quinone oxidoreductase subunit D (409 aa).

Belongs to the complex I 49 kDa subunit family. As to quaternary structure, NDH-1 is composed of 14 different subunits. Subunits NuoB, C, D, E, F, and G constitute the peripheral sector of the complex.

Its subcellular location is the cell inner membrane. The enzyme catalyses a quinone + NADH + 5 H(+)(in) = a quinol + NAD(+) + 4 H(+)(out). Its function is as follows. NDH-1 shuttles electrons from NADH, via FMN and iron-sulfur (Fe-S) centers, to quinones in the respiratory chain. The immediate electron acceptor for the enzyme in this species is believed to be ubiquinone. Couples the redox reaction to proton translocation (for every two electrons transferred, four hydrogen ions are translocated across the cytoplasmic membrane), and thus conserves the redox energy in a proton gradient. In Campylobacter curvus (strain 525.92), this protein is NADH-quinone oxidoreductase subunit D.